The primary structure comprises 251 residues: Pyrroloquinoline-quinone synthase (251 aa).

It belongs to the PqqC family.

It carries out the reaction 6-(2-amino-2-carboxyethyl)-7,8-dioxo-1,2,3,4,7,8-hexahydroquinoline-2,4-dicarboxylate + 3 O2 = pyrroloquinoline quinone + 2 H2O2 + 2 H2O + H(+). It participates in cofactor biosynthesis; pyrroloquinoline quinone biosynthesis. In terms of biological role, ring cyclization and eight-electron oxidation of 3a-(2-amino-2-carboxyethyl)-4,5-dioxo-4,5,6,7,8,9-hexahydroquinoline-7,9-dicarboxylic-acid to PQQ. The chain is Pyrroloquinoline-quinone synthase from Pseudomonas entomophila (strain L48).